Here is a 476-residue protein sequence, read N- to C-terminus: Protein EARLY HEADING DATE 2 (476 aa).

Positions 1–13 (MLLSDLSSDQEAT) are enriched in polar residues. The disordered stretch occupies residues 1–27 (MLLSDLSSDQEATGSNSHGGGGGGDRM). 2 consecutive C2H2-type zinc fingers follow at residues 106-128 (FVCE…RRGH) and 156-186 (YVCP…SRKH). 2 short sequence motifs (nuclear localization signal) span residues 124–131 (HRRGHNLP) and 178–185 (IKKHFSRK). The segment at 191 to 214 (WRCERCGKRYAVHSDWKAHVKNCG) adopts a C2H2-type 2; degenerate zinc-finger fold. Zn(2+) contacts are provided by Cys-193, Cys-196, His-209, Cys-213, Cys-220, Cys-222, His-235, and Cys-239. Residues 218 to 241 (YRCDCGILFSRKDSLLTHRAFCDA) form a CCHC-type 2; atypical zinc finger. Residues 228–240 (RKDSLLTHRAFCD) form an SHR-binding region.

Its subcellular location is the nucleus. Its function is as follows. Transcription activator that acts as a flowering master switch in both long and short days, independently of the circadian clock. Promotes flowering upstream of HD1 by up-regulating FTL1, FTL4, FTL5, FTL6, EHD1, HD3A and RFT1. Seems to repress FTL11 expression. May recognize the consensus motif 5'-TTTGTCGTAAT-3' in target gene promoters. This is Protein EARLY HEADING DATE 2 from Oryza sativa subsp. indica (Rice).